The following is a 435-amino-acid chain: Trigger factor (435 aa).

The PPIase FKBP-type domain occupies 163–248; that stretch reads GDYVTFDFKG…IKEIKVKELP (86 aa).

The protein belongs to the FKBP-type PPIase family. Tig subfamily.

The protein resides in the cytoplasm. It catalyses the reaction [protein]-peptidylproline (omega=180) = [protein]-peptidylproline (omega=0). Functionally, involved in protein export. Acts as a chaperone by maintaining the newly synthesized protein in an open conformation. Functions as a peptidyl-prolyl cis-trans isomerase. The protein is Trigger factor of Geotalea daltonii (strain DSM 22248 / JCM 15807 / FRC-32) (Geobacter daltonii).